We begin with the raw amino-acid sequence, 72 residues long: ATP synthase subunit c (72 aa).

A run of 2 helical transmembrane segments spans residues 1-21 (MSLG…GAGI) and 48-68 (MFIG…FSFI).

It belongs to the ATPase C chain family. As to quaternary structure, F-type ATPases have 2 components, F(1) - the catalytic core - and F(0) - the membrane proton channel. F(1) has five subunits: alpha(3), beta(3), gamma(1), delta(1), epsilon(1). F(0) has three main subunits: a(1), b(2) and c(10-14). The alpha and beta chains form an alternating ring which encloses part of the gamma chain. F(1) is attached to F(0) by a central stalk formed by the gamma and epsilon chains, while a peripheral stalk is formed by the delta and b chains.

Its subcellular location is the cell membrane. Functionally, f(1)F(0) ATP synthase produces ATP from ADP in the presence of a proton or sodium gradient. F-type ATPases consist of two structural domains, F(1) containing the extramembraneous catalytic core and F(0) containing the membrane proton channel, linked together by a central stalk and a peripheral stalk. During catalysis, ATP synthesis in the catalytic domain of F(1) is coupled via a rotary mechanism of the central stalk subunits to proton translocation. Key component of the F(0) channel; it plays a direct role in translocation across the membrane. A homomeric c-ring of between 10-14 subunits forms the central stalk rotor element with the F(1) delta and epsilon subunits. The polypeptide is ATP synthase subunit c (Geobacillus kaustophilus (strain HTA426)).